Consider the following 389-residue polypeptide: Probable protein phosphatase 2C 47 (389 aa).

The region spanning 76–346 (RSGSFADIGP…DNLTVIVVCF (271 aa)) is the PPM-type phosphatase domain. Residues aspartate 120, glycine 121, aspartate 294, and aspartate 337 each coordinate Mn(2+).

It belongs to the PP2C family. The cofactor is Mg(2+). Mn(2+) is required as a cofactor.

The catalysed reaction is O-phospho-L-seryl-[protein] + H2O = L-seryl-[protein] + phosphate. The enzyme catalyses O-phospho-L-threonyl-[protein] + H2O = L-threonyl-[protein] + phosphate. The polypeptide is Probable protein phosphatase 2C 47 (Oryza sativa subsp. japonica (Rice)).